The primary structure comprises 674 residues: Xaa-Pro aminopeptidase 2 (674 aa).

Residues 1–22 (MAQAYWQCYPWLVLLCACAWSY) form the signal peptide. Residue N65 is glycosylated (N-linked (GlcNAc...) asparagine). R116 contacts substrate. Residues N270, N278, and N293 are each glycosylated (N-linked (GlcNAc...) asparagine). Residue H430 participates in substrate binding. D450, D461, and H524 together coordinate Zn(2+). 3 residues coordinate substrate: H524, H533, and E555. Residues E555 and E569 each contribute to the Zn(2+) site. A lipid anchor (GPI-anchor amidated alanine) is attached at A650. The propeptide at 651–674 (RAPHIISWTSLWVASALAILSWSS) is removed in mature form.

This sequence belongs to the peptidase M24B family. Homotrimer. Zn(2+) serves as cofactor. N-glycosylated. As to expression, strongly expressed in small intestine, heart and lung. Also detected in testis, skeletal muscle, spleen, liver, kidney, brain, uterus, eye, lymph node, thymus, stomach, prostate and bone marrow.

The protein localises to the cell membrane. The catalysed reaction is Release of any N-terminal amino acid, including proline, that is linked to proline, even from a dipeptide or tripeptide.. Functionally, membrane-bound metalloprotease which catalyzes the removal of a penultimate prolyl residue from the N-termini of peptides, such as Arg-Pro-Pro. May play a role in the metabolism of the vasodilator bradykinin. In Mus musculus (Mouse), this protein is Xaa-Pro aminopeptidase 2.